A 190-amino-acid chain; its full sequence is Protein GrpE (190 aa).

Over residues 1–31 (MTEEQKKYEDAENLESKSENPEEASAEKSEN) the composition is skewed to basic and acidic residues. The tract at residues 1–39 (MTEEQKKYEDAENLESKSENPEEASAEKSENGVEDLQAE) is disordered.

The protein belongs to the GrpE family. Homodimer.

The protein localises to the cytoplasm. Functionally, participates actively in the response to hyperosmotic and heat shock by preventing the aggregation of stress-denatured proteins, in association with DnaK and GrpE. It is the nucleotide exchange factor for DnaK and may function as a thermosensor. Unfolded proteins bind initially to DnaJ; upon interaction with the DnaJ-bound protein, DnaK hydrolyzes its bound ATP, resulting in the formation of a stable complex. GrpE releases ADP from DnaK; ATP binding to DnaK triggers the release of the substrate protein, thus completing the reaction cycle. Several rounds of ATP-dependent interactions between DnaJ, DnaK and GrpE are required for fully efficient folding. The chain is Protein GrpE from Zymomonas mobilis subsp. mobilis (strain ATCC 31821 / ZM4 / CP4).